A 503-amino-acid chain; its full sequence is Probable dolichyl pyrophosphate Man9GlcNAc2 alpha-1,3-glucosyltransferase (503 aa).

Residues 1 to 46 (MKERIKDKAWRPQFIKLNNPDTSKKIVSQKSKKPEIVDLSSPGNND) are Cytoplasmic-facing. Residues 47-67 (LVTISILCVLLCFQLAISLNP) traverse the membrane as a helical segment. Residues 68–151 (HSGESQPPMY…SRGYESIAHK (84 aa)) lie on the Lumenal side of the membrane. A helical membrane pass occupies residues 152–172 (LFMRLSAIIPFYIFYLPPLIF). Residues 173–181 (YFTRSKKMS) are Cytoplasmic-facing. Residues 182 to 202 (PILYALALLYPSLLVIDNGHF) traverse the membrane as a helical segment. The Lumenal portion of the chain corresponds to 203-211 (QYNSISLGL). A helical transmembrane segment spans residues 212–232 (FLATYMFLTKNFTIIGSILFV). The Cytoplasmic segment spans residues 233–239 (AALNYKQ). Residues 240–257 (MELYHALPVFVFILARSI) traverse the membrane as a helical segment. Topologically, residues 258–268 (NKTQLFNSFRR) are lumenal. A helical membrane pass occupies residues 269–289 (ILTIGLFVVGTFLIIWLPFLL). The Cytoplasmic portion of the chain corresponds to 290–332 (TGTAKDVIIRVFPFNRGLYEDKVASFWCAFSFILKRLPLQSVQ). Residues 333–353 (IYISTALVLAGSAPSLLVLFL) form a helical membrane-spanning segment. The Lumenal segment spans residues 354-359 (RPTEKQ). Residues 360-379 (FRISLTATGLSFFLFSFHVH) form a helical membrane-spanning segment. The Cytoplasmic portion of the chain corresponds to 380 to 382 (EKT). A helical membrane pass occupies residues 383–403 (ILLAAVPALLLISEYTSLVIW). Residues 404-420 (FLNITNISIFSLCVKDN) are Lumenal-facing. Residues 421-441 (FALSLSFFFAYFVVSYAYTAP) form a helical membrane-spanning segment. At 442 to 443 (RK) the chain is on the cytoplasmic side. A helical transmembrane segment spans residues 444–464 (ISHILTILIGFAICILELYGP). At 465 to 474 (SNQRFPHIYQ) the chain is on the lumenal side. Residues 475–495 (LANAFFSCVHFIYFLLYLSFA) form a helical membrane-spanning segment. The Cytoplasmic segment spans residues 496–503 (SFEKTKKE).

This sequence belongs to the ALG6/ALG8 glucosyltransferase family.

Its subcellular location is the endoplasmic reticulum membrane. The enzyme catalyses an alpha-D-Man-(1-&gt;2)-alpha-D-Man-(1-&gt;2)-alpha-D-Man-(1-&gt;3)-[alpha-D-Man-(1-&gt;2)-alpha-D-Man-(1-&gt;3)-[alpha-D-Man-(1-&gt;2)-alpha-D-Man-(1-&gt;6)]-alpha-D-Man-(1-&gt;6)]-beta-D-Man-(1-&gt;4)-beta-D-GlcNAc-(1-&gt;4)-alpha-D-GlcNAc-diphospho-di-trans,poly-cis-dolichol + a di-trans,poly-cis-dolichyl beta-D-glucosyl phosphate = an alpha-D-Glc-(1-&gt;3)-alpha-D-Man-(1-&gt;2)-alpha-D-Man-(1-&gt;2)-alpha-D-Man-(1-&gt;3)-[alpha-D-Man-(1-&gt;2)-alpha-D-Man-(1-&gt;3)-[alpha-D-Man-(1-&gt;2)-alpha-D-Man-(1-&gt;6)]-alpha-D-Man-(1-&gt;6)]-beta-D-Man-(1-&gt;4)-beta-D-GlcNAc-(1-&gt;4)-alpha-D-GlcNAc-diphospho-di-trans,poly-cis-dolichol + a di-trans,poly-cis-dolichyl phosphate + H(+). The protein operates within protein modification; protein glycosylation. Its function is as follows. Adds the first glucose residue to the lipid-linked oligosaccharide precursor for N-linked glycosylation. Transfers glucose from dolichyl phosphate glucose (Dol-P-Glc) onto the lipid-linked oligosaccharide Man(9)GlcNAc(2)-PP-Dol. This chain is Probable dolichyl pyrophosphate Man9GlcNAc2 alpha-1,3-glucosyltransferase, found in Caenorhabditis elegans.